A 123-amino-acid chain; its full sequence is CD59A glycoprotein (123 aa).

The first 23 residues, 1 to 23 (MRAQRGLILLLLLLAVFCSTAVS), serve as a signal peptide directing secretion. A UPAR/Ly6 domain is found at 24-96 (LTCYHCFQPV…CCQFNLCNKS (73 aa)). Disulfide bonds link Cys-26/Cys-50, Cys-29/Cys-37, Cys-43/Cys-63, Cys-69/Cys-87, and Cys-88/Cys-93. Asn-40 carries N-linked (GlcNAc...) asparagine glycosylation. N-linked (GlcNAc...) asparagine glycosylation is present at Asn-94. Positions 97–123 (DGSLGKTPLLGTSVLVAILNLCFLSHL) are cleaved as a propeptide — removed in mature form.

As to quaternary structure, interacts with T-cell surface antigen CD2. In terms of processing, N- and O-glycosylated. In terms of tissue distribution, expressed in all tissues examined (liver, kidney, spleen, thymus, brain and heart). Low levels in thymus. Also expressed in mononuclear cells, erythrocytes and platelets. Barely detected in neutrophils.

The protein resides in the cell membrane. Its subcellular location is the secreted. Its function is as follows. Potent inhibitor of the complement membrane attack complex (MAC) action, which protects self-cells from damage during complement activation. Acts by binding to the beta-haipins of C8 (C8A and C8B) components of the assembling MAC, forming an intermolecular beta-sheet that prevents incorporation of the multiple copies of C9 required for complete formation of the osmolytic pore. The polypeptide is CD59A glycoprotein (Mus musculus (Mouse)).